The sequence spans 147 residues: MKIVIQRVQSASVAIEDSTVGTIKQGLLLLVGVGPEDTKEDLDYAVRKIINMRIFSDEDGKMNLSVKDIGGQILSISQFTLFADTKKGNRPAFTGAAKPDMASQFYDDFNQSLSSYVPVERGRFGADMQVSLVNDGPVTVILDTKNR.

A Gly-cisPro motif, important for rejection of L-amino acids motif is present at residues 136 to 137; the sequence is GP.

This sequence belongs to the DTD family. Homodimer.

The protein resides in the cytoplasm. It carries out the reaction glycyl-tRNA(Ala) + H2O = tRNA(Ala) + glycine + H(+). It catalyses the reaction a D-aminoacyl-tRNA + H2O = a tRNA + a D-alpha-amino acid + H(+). Its function is as follows. An aminoacyl-tRNA editing enzyme that deacylates mischarged D-aminoacyl-tRNAs. Also deacylates mischarged glycyl-tRNA(Ala), protecting cells against glycine mischarging by AlaRS. Acts via tRNA-based rather than protein-based catalysis; rejects L-amino acids rather than detecting D-amino acids in the active site. By recycling D-aminoacyl-tRNA to D-amino acids and free tRNA molecules, this enzyme counteracts the toxicity associated with the formation of D-aminoacyl-tRNA entities in vivo and helps enforce protein L-homochirality. This chain is D-aminoacyl-tRNA deacylase, found in Streptococcus thermophilus (strain CNRZ 1066).